The chain runs to 239 residues: AA9 family lytic polysaccharide monooxygenase C (239 aa).

His-1 contacts Cu(2+). Cys-39 and Cys-190 are joined by a disulfide. The N-linked (GlcNAc...) asparagine glycan is linked to Asn-75. Residue His-84 participates in Cu(2+) binding. A glycan (N-linked (GlcNAc...) asparagine) is linked at Asn-135. O2-binding residues include His-157 and Gln-166. Tyr-168 lines the Cu(2+) pocket. N-linked (GlcNAc...) asparagine glycans are attached at residues Asn-194 and Asn-229.

Belongs to the polysaccharide monooxygenase AA9 family. Cu(2+) serves as cofactor.

The protein resides in the secreted. It catalyses the reaction [(1-&gt;4)-beta-D-glucosyl]n+m + reduced acceptor + O2 = 4-dehydro-beta-D-glucosyl-[(1-&gt;4)-beta-D-glucosyl]n-1 + [(1-&gt;4)-beta-D-glucosyl]m + acceptor + H2O.. Lytic polysaccharide monooxygenase (LPMO) that depolymerizes crystalline and amorphous polysaccharides via the oxidation of scissile alpha- or beta-(1-4)-glycosidic bonds, yielding C1 or C4 oxidation products. Catalysis by LPMOs requires the reduction of the active-site copper from Cu(II) to Cu(I) by a reducing agent and H(2)O(2) or O(2) as a cosubstrate. The chain is AA9 family lytic polysaccharide monooxygenase C from Gloeophyllum trabeum (Brown rot fungus).